Consider the following 430-residue polypeptide: Formate-dependent phosphoribosylglycinamide formyltransferase (430 aa).

N(1)-(5-phospho-beta-D-ribosyl)glycinamide is bound by residues 26–27 and Glu-86; that span reads EL. ATP contacts are provided by residues Arg-118, Lys-159, 199 to 202, and Glu-207; that span reads EEHI. An ATP-grasp domain is found at 123–319; the sequence is ETLVKEAKVP…EFALHLRAVL (197 aa). Glu-276 and Glu-288 together coordinate Mg(2+). N(1)-(5-phospho-beta-D-ribosyl)glycinamide-binding positions include Asp-295, Lys-375, and 382–383; that span reads RR.

This sequence belongs to the PurK/PurT family. Homodimer.

The enzyme catalyses N(1)-(5-phospho-beta-D-ribosyl)glycinamide + formate + ATP = N(2)-formyl-N(1)-(5-phospho-beta-D-ribosyl)glycinamide + ADP + phosphate + H(+). The protein operates within purine metabolism; IMP biosynthesis via de novo pathway; N(2)-formyl-N(1)-(5-phospho-D-ribosyl)glycinamide from N(1)-(5-phospho-D-ribosyl)glycinamide (formate route): step 1/1. Functionally, involved in the de novo purine biosynthesis. Catalyzes the transfer of formate to 5-phospho-ribosyl-glycinamide (GAR), producing 5-phospho-ribosyl-N-formylglycinamide (FGAR). Formate is provided by PurU via hydrolysis of 10-formyl-tetrahydrofolate. This chain is Formate-dependent phosphoribosylglycinamide formyltransferase, found in Pyrococcus horikoshii (strain ATCC 700860 / DSM 12428 / JCM 9974 / NBRC 100139 / OT-3).